Here is a 347-residue protein sequence, read N- to C-terminus: (RS)-norcoclaurine 6-O-methyltransferase (347 aa).

G192, D215, D235, M236, and K249 together coordinate S-adenosyl-L-methionine. H253 (proton acceptor) is an active-site residue.

The protein belongs to the class I-like SAM-binding methyltransferase superfamily. Cation-independent O-methyltransferase family. COMT subfamily. As to quaternary structure, homodimer.

The enzyme catalyses norcoclaurine + S-adenosyl-L-methionine = coclaurine + S-adenosyl-L-homocysteine + H(+). It participates in alkaloid biosynthesis; (S)-reticuline biosynthesis; (S)-reticuline from (S)-norcoclaurine: step 1/4. Its function is as follows. Catalyzes the transfer of the S-methyl group of S-adenosyl-L-methionine (AdoMet) to the 6-hydroxyl group of norcoclaurine to form coclaurine. The polypeptide is (RS)-norcoclaurine 6-O-methyltransferase (Coptis japonica (Japanese goldthread)).